A 90-amino-acid polypeptide reads, in one-letter code: Acylphosphatase (90 aa).

In terms of domain architecture, Acylphosphatase-like spans 3-90 (AVTLKATGRV…QNYHDFRITN (88 aa)). Active-site residues include Arg18 and Asn36.

The protein belongs to the acylphosphatase family.

It catalyses the reaction an acyl phosphate + H2O = a carboxylate + phosphate + H(+). The sequence is that of Acylphosphatase (acyP) from Lactiplantibacillus plantarum (strain ATCC BAA-793 / NCIMB 8826 / WCFS1) (Lactobacillus plantarum).